The chain runs to 160 residues: Nucleotide-binding protein AHA_1129 (160 aa).

This sequence belongs to the YajQ family.

Functionally, nucleotide-binding protein. In Aeromonas hydrophila subsp. hydrophila (strain ATCC 7966 / DSM 30187 / BCRC 13018 / CCUG 14551 / JCM 1027 / KCTC 2358 / NCIMB 9240 / NCTC 8049), this protein is Nucleotide-binding protein AHA_1129.